A 563-amino-acid polypeptide reads, in one-letter code: Zinc finger CCHC domain-containing protein 7 (563 aa).

2 disordered regions span residues 41 to 64 (SQNL…VPGA) and 133 to 157 (SHST…QNSS). The segment covering 133 to 142 (SHSTPKVSAP) has biased composition (polar residues). Positions 143-157 (QSNNFKSQKSCQNSS) are enriched in low complexity. 5 consecutive CCHC-type zinc fingers follow at residues 265–282 (VVCR…NCPV), 287–304 (PACC…SCPS), 305–322 (RYCL…ECIE), 328–345 (KTCH…ACPE), and 372–389 (VYCC…ECKE). Residues 443–494 (KVDAKPPAKKRKKKHPSKKERKGTIRDYECAETKQKKKHKKRKSGLQEIEGD) are disordered. Basic residues predominate over residues 449 to 463 (PAKKRKKKHPSKKER). Residues 464–476 (KGTIRDYECAETK) are compositionally biased toward basic and acidic residues. Residues 477–486 (QKKKHKKRKS) are compositionally biased toward basic residues.

In terms of assembly, component of a nucleolar TRAMP-like complex, an ATP-dependent exosome regulatory complex consisting of a helicase (MTREX), an oligadenylate polymerase (PAPD5 or PAPD7), and a substrate specific RNA-binding factor (ZCCHC7 or ZCCHC8). Several TRAMP-like complexes exist with specific compositions and are associated with nuclear, or nucleolar RNA exosomes.

It is found in the nucleus. It localises to the nucleolus. The sequence is that of Zinc finger CCHC domain-containing protein 7 (zcchc7) from Xenopus laevis (African clawed frog).